The chain runs to 448 residues: Probable glycine dehydrogenase (decarboxylating) subunit 1 (448 aa).

This sequence belongs to the GcvP family. N-terminal subunit subfamily. The glycine cleavage system is composed of four proteins: P, T, L and H. In this organism, the P 'protein' is a heterodimer of two subunits.

It carries out the reaction N(6)-[(R)-lipoyl]-L-lysyl-[glycine-cleavage complex H protein] + glycine + H(+) = N(6)-[(R)-S(8)-aminomethyldihydrolipoyl]-L-lysyl-[glycine-cleavage complex H protein] + CO2. In terms of biological role, the glycine cleavage system catalyzes the degradation of glycine. The P protein binds the alpha-amino group of glycine through its pyridoxal phosphate cofactor; CO(2) is released and the remaining methylamine moiety is then transferred to the lipoamide cofactor of the H protein. This is Probable glycine dehydrogenase (decarboxylating) subunit 1 from Exiguobacterium sibiricum (strain DSM 17290 / CCUG 55495 / CIP 109462 / JCM 13490 / 255-15).